A 388-amino-acid polypeptide reads, in one-letter code: Formate-dependent phosphoribosylglycinamide formyltransferase (388 aa).

N(1)-(5-phospho-beta-D-ribosyl)glycinamide contacts are provided by residues 15–16 and E75; that span reads EL. Residues R107, K148, 153-158, 188-191, and E196 contribute to the ATP site; these read SSGKGQ and EEFL. Positions 112 to 302 constitute an ATP-grasp domain; that stretch reads DLAAGELALR…EFELHLRAVL (191 aa). 2 residues coordinate Mg(2+): E261 and E273. N(1)-(5-phospho-beta-D-ribosyl)glycinamide contacts are provided by residues D280, K350, and 357–358; that span reads RR.

It belongs to the PurK/PurT family. In terms of assembly, homodimer.

It catalyses the reaction N(1)-(5-phospho-beta-D-ribosyl)glycinamide + formate + ATP = N(2)-formyl-N(1)-(5-phospho-beta-D-ribosyl)glycinamide + ADP + phosphate + H(+). Its pathway is purine metabolism; IMP biosynthesis via de novo pathway; N(2)-formyl-N(1)-(5-phospho-D-ribosyl)glycinamide from N(1)-(5-phospho-D-ribosyl)glycinamide (formate route): step 1/1. In terms of biological role, involved in the de novo purine biosynthesis. Catalyzes the transfer of formate to 5-phospho-ribosyl-glycinamide (GAR), producing 5-phospho-ribosyl-N-formylglycinamide (FGAR). Formate is provided by PurU via hydrolysis of 10-formyl-tetrahydrofolate. This is Formate-dependent phosphoribosylglycinamide formyltransferase from Parasynechococcus marenigrum (strain WH8102).